A 464-amino-acid chain; its full sequence is Probable glycosyltransferase Saci_1499 (464 aa).

The next 6 membrane-spanning stretches (helical) occupy residues 6–26, 300–320, 337–357, 373–393, 416–436, and 439–459; these read IFLN…QIIL, LIIY…STLL, ALLF…SLAL, LTAF…KGLL, IIAI…LYIY, and YYVT…TMLL.

The protein belongs to the glycosyltransferase 2 family.

It is found in the cell membrane. Its function is as follows. Probably part of a 4-gene DNA damage response locus in which the upstream ups system, in combination with this downstream locus, functions in homologous recombination to rescue Sulfolobales from DNA-damaging threats. In Sulfolobus acidocaldarius (strain ATCC 33909 / DSM 639 / JCM 8929 / NBRC 15157 / NCIMB 11770), this protein is Probable glycosyltransferase Saci_1499.